Here is a 99-residue protein sequence, read N- to C-terminus: DNA-directed RNA polymerase subunit omega (99 aa).

The span at 1–10 shows a compositional bias: low complexity; it reads MSSTSAASAA. Residues 1–20 form a disordered region; it reads MSSTSAASAAGQGALPAYDT.

It belongs to the RNA polymerase subunit omega family. In terms of assembly, the RNAP catalytic core consists of 2 alpha, 1 beta, 1 beta' and 1 omega subunit. When a sigma factor is associated with the core the holoenzyme is formed, which can initiate transcription.

It carries out the reaction RNA(n) + a ribonucleoside 5'-triphosphate = RNA(n+1) + diphosphate. In terms of biological role, promotes RNA polymerase assembly. Latches the N- and C-terminal regions of the beta' subunit thereby facilitating its interaction with the beta and alpha subunits. The polypeptide is DNA-directed RNA polymerase subunit omega (Rhodococcus erythropolis (strain PR4 / NBRC 100887)).